The following is a 162-amino-acid chain: 3-hydroxyacyl-[acyl-carrier-protein] dehydratase FabZ (162 aa).

Residue histidine 49 is part of the active site.

Belongs to the thioester dehydratase family. FabZ subfamily.

Its subcellular location is the cytoplasm. The catalysed reaction is a (3R)-hydroxyacyl-[ACP] = a (2E)-enoyl-[ACP] + H2O. In terms of biological role, involved in unsaturated fatty acids biosynthesis. Catalyzes the dehydration of short chain beta-hydroxyacyl-ACPs and long chain saturated and unsaturated beta-hydroxyacyl-ACPs. The protein is 3-hydroxyacyl-[acyl-carrier-protein] dehydratase FabZ of Solibacter usitatus (strain Ellin6076).